The chain runs to 551 residues: Protein GPR107 (551 aa).

A signal peptide spans 1–33 (MAVPVPLGRFGSFCLRLLRLLALLELLVHPVLG). At 40–262 (LKDDVRHKVH…YLSAGEIPLP (223 aa)) the chain is on the extracellular side. Residues asparagine 64 and asparagine 209 are each glycosylated (N-linked (GlcNAc...) asparagine). Cysteine 106 and cysteine 226 are oxidised to a cystine. Residues 263–283 (KLYVSMALFFFLSGTIWIHIL) traverse the membrane as a helical segment. Residues 284–292 (RKRRNDVFK) are Cytoplasmic-facing. The chain crosses the membrane as a helical span at residues 293-313 (IHWLMAALPFTKSLSLVFHAI). The Extracellular portion of the chain corresponds to 314–336 (DYHYISSQGFPIEGWAVVYYITH). Residues 337–357 (LLKGALLFITIALIGTGWAFI) traverse the membrane as a helical segment. At 358 to 367 (KHILSDKDKK) the chain is on the cytoplasmic side. Residues 368–388 (IFMIVIPLQVLANVAYIIIES) traverse the membrane as a helical segment. The Extracellular segment spans residues 389-401 (TEEGTTEYGLWKD). The helical transmembrane segment at 402–422 (SLFLVDLLCCGAILFPVVWSI) threads the bilayer. The Cytoplasmic segment spans residues 423-449 (RHLQEASATDGKAAINLAKLRLFRHYY). The helical transmembrane segment at 450 to 470 (VLIVCYIYFTRIIAFLLKFAV) threads the bilayer. Topologically, residues 471–475 (PFQWK) are extracellular. Residues 476 to 495 (WLYQLLDETATLVFFVLTGY) form a helical membrane-spanning segment. Topologically, residues 496-551 (KFRPASDNPYLQLSQEDDDLEMESVVTTSGVMENMKKVKKVSNGAVEPQGSWEGTA) are cytoplasmic. Serine 537 is subject to Phosphoserine.

Belongs to the LU7TM family. Cleaved by FURIN to yield two fragments that remain associated via a disulfide bond.

It localises to the cell membrane. The protein resides in the golgi apparatus. Its subcellular location is the trans-Golgi network membrane. Its function is as follows. Has been proposed to act as a receptor for neuronostatin, a peptide derived from the somatostatin/SST precursor. Involved in blood sugar regulation through the induction of glucagon in response to low glucose. The sequence is that of Protein GPR107 (Gpr107) from Mus musculus (Mouse).